Here is a 255-residue protein sequence, read N- to C-terminus: Putative cysteine-rich repeat secretory protein 10 (255 aa).

The first 26 residues, 1-26 (MFSSSVSISILVVVAMQFSFIHNVLS), serve as a signal peptide directing secretion. 2 Gnk2-homologous domains span residues 33-134 (YLQH…EIYT) and 140-252 (FKHY…LYPF).

Belongs to the cysteine-rich repeat secretory protein family.

The protein localises to the secreted. The sequence is that of Putative cysteine-rich repeat secretory protein 10 (CRRSP10) from Arabidopsis thaliana (Mouse-ear cress).